The primary structure comprises 806 residues: Transitional endoplasmic reticulum ATPase (806 aa).

An N-acetylalanine modification is found at Ala2. Residues Ser3 and Ser7 each carry the phosphoserine modification. A Glycyl lysine isopeptide (Lys-Gly) (interchain with G-Cter in SUMO2) cross-link involves residue Lys8. Ser13 carries the post-translational modification Phosphoserine. Lys18 participates in a covalent cross-link: Glycyl lysine isopeptide (Lys-Gly) (interchain with G-Cter in SUMO2). A Phosphoserine modification is found at Ser37. An ATP-binding site is contributed by 247 to 253; that stretch reads PGTGKTL. Lys315 is modified (N6,N6,N6-trimethyllysine; by VCPKMT). Residues Asn348 and His384 each coordinate ATP. Thr436 is modified (phosphothreonine). At Ser462 the chain carries Phosphoserine. Lys502 and Lys505 each carry N6-acetyllysine. An ATP-binding site is contributed by 521–526; sequence GCGKTL. Lys668 carries the N6-acetyllysine; alternate modification. At Lys668 the chain carries N6-succinyllysine; alternate. Residue Ser702 is modified to Phosphoserine. The interval 708-727 is disordered; it reads RRERERQTNPSAMEVEEDDP. An N6-acetyllysine modification is found at Lys754. Residues 768–806 are disordered; the sequence is FGSFRFPSGNQGGAGPSQGSGGGTGGNVYTEDNDDDLYG. Phosphoserine is present on residues Ser770, Ser775, and Ser787. Residues 777–793 show a composition bias toward gly residues; it reads NQGGAGPSQGSGGGTGG. The tract at residues 797-806 is interaction with UBXN6; it reads TEDNDDDLYG. Residues 802–806 carry the PIM motif motif; that stretch reads DDLYG. Tyr805 is subject to Phosphotyrosine.

This sequence belongs to the AAA ATPase family. In terms of assembly, homohexamer. Forms a ring-shaped particle of 12.5 nm diameter, that displays 6-fold radial symmetry. Part of a ternary complex containing STX5A, NSFL1C and VCP. NSFL1C forms a homotrimer that binds to one end of a VCP homohexamer. The complex binds to membranes enriched in phosphatidylethanolamine-containing lipids and promotes Golgi membrane fusion. Binds to a heterodimer of NPLOC4 and UFD1, binding to this heterodimer inhibits Golgi-membrane fusion. Interaction with VCIP135 leads to dissociation of the complex via ATP hydrolysis by VCP. Part of a ternary complex containing NPLOC4, UFD1 and VCP. Interacts with NSFL1C-like protein p37; the complex has membrane fusion activity and is required for Golgi and endoplasmic reticulum biogenesis. Interacts with SELENOS and SYVN1, as well as with DERL1 (via SHP-box motif), DERL2 and DERL3; which probably transfer misfolded proteins from the ER to VCP. Interacts with SVIP and DERL1. Component of a complex required to couple retrotranslocation, ubiquitination and deglycosylation composed of NGLY1, SAKS1, AMFR, VCP and RAD23B. Part of a complex composed of STUB1/CHIP, VCP/p97, CHRNA3, and UBXN2A that modulates the ubiquitination and endoplasmic reticulum-associated degradation (ERAD) of CHRNA3. Within the complex UBXN2A acts as a scaffold protein required for the interaction of CHRNA3 with VCP/p97, this interaction also inhibits CHRNA3 ubiquitination by STUB1/CHIP and subsequently ERAD. Interacts with UBXN2A (via UBX domain); the interaction is required for the interaction of CHRNA3 in the STUB1-VCP-UBXN2A complex. Directly interacts with UBXN4 and RNF19A. Interacts with CASR. Interacts with UBE4B and YOD1. Interacts with clathrin. Interacts with RNF103. Interacts with TRIM13 and TRIM21. Component of a VCP/p97-AMFR/gp78 complex that participates in the final step of the endoplasmic reticulum-associated degradation (ERAD) of HMGCR. Interacts directly with AMFR/gp78 (via its VIM). Interacts with RHBDD1 (via C-terminal domain). Interacts with SPRTN; leading to recruitment to stalled replication forks. Interacts with WASHC5. Interacts with UBOX5. Interacts (via N-terminus) with UBXN7, UBXN8, and probably several other UBX domain-containing proteins (via UBX domains); the interactions are mutually exclusive with VIM-dependent interactions such as those with AMFR and SELENOS. Forms a complex with UBQLN1 and UBXN4. Interacts (via the PIM motif) with RNF31 (via the PUB domain). Interacts with RIGI and RNF125; interaction takes place when RIGI is ubiquitinated via 'Lys-63'-linked ubiquitin on its CARD domains, leading to recruit RNF125 and promote ubiquitination and degradation of RIGI. Interacts with BAG6. Interacts with UBXN10. Interacts with UBXN6; the interaction with UBXN6 is direct and competitive with UFD1. Forms a ternary complex with CAV1 and UBXN6. Interacts with PLAA, UBXN6 and YOD1; may form a complex involved in macroautophagy. Interacts with ANKZF1. Interacts with ubiquitin-binding protein FAF1. Interacts with ZFAND2B (via VIM motif); the interaction is direct. Interacts with ZFAND1 (via its ubiquitin-like region); this interaction occurs in an arsenite-dependent manner. Interacts with CCDC47. Interacts with LMBR1L and UBAC2. Interacts with ATXN3. Interacts with TEX264; bridging VCP to covalent DNA-protein cross-links (DPCs). ISGylated. Post-translationally, methylation at Lys-315 catalyzed by VCPKMT is increased in the presence of ASPSCR1. Lys-315 methylation may decrease ATPase activity. In terms of processing, phosphorylated by tyrosine kinases in response to T-cell antigen receptor activation. Phosphorylated in mitotic cells.

The protein localises to the cytoplasm. It localises to the cytosol. The protein resides in the endoplasmic reticulum. It is found in the nucleus. Its subcellular location is the stress granule. It catalyses the reaction ATP + H2O = ADP + phosphate + H(+). Necessary for the fragmentation of Golgi stacks during mitosis and for their reassembly after mitosis. Involved in the formation of the transitional endoplasmic reticulum (tER). The transfer of membranes from the endoplasmic reticulum to the Golgi apparatus occurs via 50-70 nm transition vesicles which derive from part-rough, part-smooth transitional elements of the endoplasmic reticulum (tER). Vesicle budding from the tER is an ATP-dependent process. The ternary complex containing UFD1, VCP and NPLOC4 binds ubiquitinated proteins and is necessary for the export of misfolded proteins from the ER to the cytoplasm, where they are degraded by the proteasome. The NPLOC4-UFD1-VCP complex regulates spindle disassembly at the end of mitosis and is necessary for the formation of a closed nuclear envelope. Regulates E3 ubiquitin-protein ligase activity of RNF19A. Component of the VCP/p97-AMFR/gp78 complex that participates in the final step of the sterol-mediated ubiquitination and endoplasmic reticulum-associated degradation (ERAD) of HMGCR. Mediates the endoplasmic reticulum-associated degradation of CHRNA3 in cortical neurons as part of the STUB1-VCP-UBXN2A complex. Involved in endoplasmic reticulum stress-induced pre-emptive quality control, a mechanism that selectively attenuates the translocation of newly synthesized proteins into the endoplasmic reticulum and reroutes them to the cytosol for proteasomal degradation. Involved in clearance process by mediating G3BP1 extraction from stress granules. Also involved in DNA damage response: recruited to double-strand breaks (DSBs) sites in a RNF8- and RNF168-dependent manner and promotes the recruitment of TP53BP1 at DNA damage sites. Recruited to stalled replication forks by SPRTN: may act by mediating extraction of DNA polymerase eta (POLH) to prevent excessive translesion DNA synthesis and limit the incidence of mutations induced by DNA damage. Together with SPRTN metalloprotease, involved in the repair of covalent DNA-protein cross-links (DPCs) during DNA synthesis. Involved in interstrand cross-link repair in response to replication stress by mediating unloading of the ubiquitinated CMG helicase complex. Mediates extraction of PARP1 trapped to chromatin: recognizes and binds ubiquitinated PARP1 and promotes its removal. Required for cytoplasmic retrotranslocation of stressed/damaged mitochondrial outer-membrane proteins and their subsequent proteasomal degradation. Essential for the maturation of ubiquitin-containing autophagosomes and the clearance of ubiquitinated protein by autophagy. Acts as a negative regulator of type I interferon production by interacting with RIGI: interaction takes place when RIGI is ubiquitinated via 'Lys-63'-linked ubiquitin on its CARD domains, leading to recruit RNF125 and promote ubiquitination and degradation of RIGI. May play a role in the ubiquitin-dependent sorting of membrane proteins to lysosomes where they undergo degradation. May more particularly play a role in caveolins sorting in cells. By controlling the steady-state expression of the IGF1R receptor, indirectly regulates the insulin-like growth factor receptor signaling pathway. This chain is Transitional endoplasmic reticulum ATPase (VCP), found in Bos taurus (Bovine).